The sequence spans 129 residues: Prefoldin subunit 6 (129 aa).

Ala-2 is subject to N-acetylalanine. At Lys-21 the chain carries N6-acetyllysine. Lys-66 carries the N6-acetyllysine; alternate modification. Lys-66 participates in a covalent cross-link: Glycyl lysine isopeptide (Lys-Gly) (interchain with G-Cter in SUMO1); alternate. Residue Lys-66 forms a Glycyl lysine isopeptide (Lys-Gly) (interchain with G-Cter in SUMO2); alternate linkage.

Belongs to the prefoldin subunit beta family. In terms of assembly, heterohexamer of two PFD-alpha type and four PFD-beta type subunits. Component of the PAQosome complex which is responsible for the biogenesis of several protein complexes and which consists of R2TP complex members RUVBL1, RUVBL2, RPAP3 and PIH1D1, URI complex members PFDN2, PFDN6, PDRG1, UXT and URI1 as well as ASDURF, POLR2E and DNAAF10/WDR92.

Binds specifically to cytosolic chaperonin (c-CPN) and transfers target proteins to it. Binds to nascent polypeptide chain and promotes folding in an environment in which there are many competing pathways for nonnative proteins. This is Prefoldin subunit 6 (PFDN6) from Homo sapiens (Human).